The chain runs to 331 residues: 4-hydroxythreonine-4-phosphate dehydrogenase (331 aa).

Residues histidine 137 and threonine 138 each contribute to the substrate site. Positions 167, 212, and 267 each coordinate a divalent metal cation. Residues lysine 275, asparagine 284, and arginine 293 each contribute to the substrate site.

Belongs to the PdxA family. As to quaternary structure, homodimer. The cofactor is Zn(2+). Mg(2+) serves as cofactor. Co(2+) is required as a cofactor.

Its subcellular location is the cytoplasm. It catalyses the reaction 4-(phosphooxy)-L-threonine + NAD(+) = 3-amino-2-oxopropyl phosphate + CO2 + NADH. The protein operates within cofactor biosynthesis; pyridoxine 5'-phosphate biosynthesis; pyridoxine 5'-phosphate from D-erythrose 4-phosphate: step 4/5. Catalyzes the NAD(P)-dependent oxidation of 4-(phosphooxy)-L-threonine (HTP) into 2-amino-3-oxo-4-(phosphooxy)butyric acid which spontaneously decarboxylates to form 3-amino-2-oxopropyl phosphate (AHAP). In Yersinia pestis bv. Antiqua (strain Angola), this protein is 4-hydroxythreonine-4-phosphate dehydrogenase.